Consider the following 168-residue polypeptide: MTSLNTNVEHRRTRTTISQIIHDMTPENKFYITVADGGSKRFRNKPNDQSRHSGQYQPRNLSGKTNISTQSQFTPRLYGKQYNYNQPNRLQTRSVRPNYYSGYRYNNRTGNQEFYPMQPFNNQSFNNQSRTHQSKTYQHNQQKRSFNGPRNNGPQNNVPRFFQREETN.

Disordered stretches follow at residues 37–74 (GGSK…SQFT), 81–100 (QYNY…PNYY), and 117–168 (MQPF…EETN). Polar residues-rich tracts occupy residues 52-74 (HSGQ…SQFT) and 82-95 (YNYN…TRSV). Residues 120 to 129 (FNNQSFNNQS) are compositionally biased toward low complexity. Positions 130 to 158 (RTHQSKTYQHNQQKRSFNGPRNNGPQNNV) are enriched in polar residues.

This is an uncharacterized protein from Acanthamoeba polyphaga (Amoeba).